Reading from the N-terminus, the 491-residue chain is GTPase Der (491 aa).

The EngA-type G 1 domain occupies 3-178 (AKIALVGRPN…EMRDLLPEED (176 aa)). GTP contacts are provided by residues 9 to 16 (GRPNVGKS), 57 to 61 (DTGGI), and 130 to 133 (NKVD). Over residues 198 to 224 (DAETEDGASASETEEDITEETVEDEPE) the composition is skewed to acidic residues. Residues 198–225 (DAETEDGASASETEEDITEETVEDEPEA) form a disordered region. One can recognise an EngA-type G 2 domain in the interval 227-400 (LRLCMLGRPN…LAARIRRECS (174 aa)). GTP contacts are provided by residues 233 to 240 (GRPNAGKS), 280 to 284 (DTAGV), and 345 to 348 (NKMD). The 85-residue stretch at 401–485 (VRIPTGQLNR…PMRVHFRSSH (85 aa)) folds into the KH-like domain.

It belongs to the TRAFAC class TrmE-Era-EngA-EngB-Septin-like GTPase superfamily. EngA (Der) GTPase family. In terms of assembly, associates with the 50S ribosomal subunit.

Its function is as follows. GTPase that plays an essential role in the late steps of ribosome biogenesis. This Nitratidesulfovibrio vulgaris (strain ATCC 29579 / DSM 644 / CCUG 34227 / NCIMB 8303 / VKM B-1760 / Hildenborough) (Desulfovibrio vulgaris) protein is GTPase Der.